An 817-amino-acid polypeptide reads, in one-letter code: B lymphocyte-induced maturation protein 1 homolog (817 aa).

The disordered stretch occupies residues 1–62; sequence MGQGSGDDGV…PAGVSASGAR (62 aa). Low complexity predominate over residues 15-61; it reads FSSAAAAAHSPPHSPLSVGVSSASSATSSSSTPPSSTSPAGVSASGA. Residues 103–241 form the SET domain; sequence MNLILKSSSK…ANTELSFWFS (139 aa). C2H2-type zinc fingers lie at residues 508-530, 536-558, 564-586, and 592-614; these read YACK…VRTH, FKCE…HLVH, HRCD…LRLH, and YTCD…KRLH. The segment at 620-642 adopts a C2H2-type 5; degenerate zinc-finger fold; sequence YSCGTCGKKYISPSGLRTHWKTT. The tract at residues 709 to 817 is disordered; sequence LLGQGPSGMQ…LPSLGLPHYP (109 aa). A compositionally biased stretch (low complexity) spans 779–794; sequence QGGPSSGSGQQQHPQH.

As to quaternary structure, interacts with dre-1; the interaction targets blmp-1 for proteasomal degradation. Interacts with ldb-1 and ham-3. Ubiquitinated by the SCF(dre-1) complex, leading to its degradation by the proteasome. As to expression, expressed in hypodermal, vulval, intestinal and distal tip cells.

Its subcellular location is the nucleus. The protein resides in the cytoplasm. Functionally, transcription factor which binds to enhancer elements in the promoter region of genes. Regulates the expression of the transcription factor bed-3 to control vulval development. Promotes terminal differentiation in the hypodermis and is involved in regulation of gonadal outgrowth and entry into the dauer stage. Regulates the timing of dorsalward migration of the distal tip cells of the hermaphrodite gonad by inhibiting precocious unc-5 and lin-29 expression which in turn prevents early dorsalward turning. Plays a role in male tail tip morphogenesis. This is B lymphocyte-induced maturation protein 1 homolog from Caenorhabditis elegans.